Reading from the N-terminus, the 270-residue chain is 5'-AMP-activated protein kinase subunit beta-1 (270 aa).

The segment at 1-44 (MGNTSSERAALERQAGHKTPRRDSSGGAKDGDRPKILMDSPEDA) is disordered. A lipid anchor (N-myristoyl glycine) is attached at Gly-2. Position 4 is a phosphothreonine (Thr-4). 2 positions are modified to phosphoserine: Ser-5 and Ser-6. Basic and acidic residues predominate over residues 9-36 (AALERQAGHKTPRRDSSGGAKDGDRPKI). Thr-19 is modified (phosphothreonine). Ser-24 and Ser-25 each carry phosphoserine; by autocatalysis. Phosphoserine occurs at positions 40, 96, and 101. Positions 68-163 (EANDKAPAQA…QVKKTDFEVF (96 aa)) are glycogen-binding domain. A Phosphoserine; by autocatalysis modification is found at Ser-108. At Thr-148 the chain carries Phosphothreonine. Ser-182 is modified (phosphoserine). An N6-succinyllysine modification is found at Lys-201.

Belongs to the 5'-AMP-activated protein kinase beta subunit family. In terms of assembly, AMPK is a heterotrimer of an alpha catalytic subunit (PRKAA1 or PRKAA2), a beta (PRKAB1 or PRKAB2) and a gamma non-catalytic subunits (PRKAG1, PRKAG2 or PRKAG3). Interacts with FNIP1 and FNIP2. Phosphorylated when associated with the catalytic subunit (PRKAA1 or PRKAA2). Phosphorylated by ULK1; leading to negatively regulate AMPK activity and suggesting the existence of a regulatory feedback loop between ULK1 and AMPK.

Its function is as follows. Non-catalytic subunit of AMP-activated protein kinase (AMPK), an energy sensor protein kinase that plays a key role in regulating cellular energy metabolism. In response to reduction of intracellular ATP levels, AMPK activates energy-producing pathways and inhibits energy-consuming processes: inhibits protein, carbohydrate and lipid biosynthesis, as well as cell growth and proliferation. AMPK acts via direct phosphorylation of metabolic enzymes, and by longer-term effects via phosphorylation of transcription regulators. Also acts as a regulator of cellular polarity by remodeling the actin cytoskeleton; probably by indirectly activating myosin. Beta non-catalytic subunit acts as a scaffold on which the AMPK complex assembles, via its C-terminus that bridges alpha (PRKAA1 or PRKAA2) and gamma subunits (PRKAG1, PRKAG2 or PRKAG3). The chain is 5'-AMP-activated protein kinase subunit beta-1 (Prkab1) from Mus musculus (Mouse).